A 353-amino-acid chain; its full sequence is MDPGPAGDEVSLAPQQETAEQDVETTLRPRRLSEFVGQARVREQLELVLHGALNRGDQPDHVLFSGPPGLGKTSLAMIIAAELGASIRVTSGPALERPGDLAAMLSNLAEGDVLFIDEIHRIARPAEEMLYLAMEDYRVDIVVGKGPGATSIPLEIAPFTLVGATTRSGALTGPLRDRFGFTAHMEFYEPAELELVVRRSAGILGVDLRDEGAVEIARRSRGTPRIANRLLRRVRDFAEVRADGAVTLDVARAALEVYDVDEHGLDRLDRAVLGALVRSFNGGPVGVSTLAVAVGEEPTTVEEVCEPYLVRAGMLARTPRGRVATVAAWQHLGLVPPQHAPGEATRSLFADEV.

The interval 1–25 (MDPGPAGDEVSLAPQQETAEQDVET) is disordered. The segment at 1-188 (MDPGPAGDEV…FGFTAHMEFY (188 aa)) is large ATPase domain (RuvB-L). ATP-binding positions include L27, R28, G69, K72, T73, S74, 135–137 (EDY), R178, Y188, and R225. T73 contributes to the Mg(2+) binding site. A small ATPAse domain (RuvB-S) region spans residues 189-259 (EPAELELVVR…VARAALEVYD (71 aa)). A head domain (RuvB-H) region spans residues 262–353 (EHGLDRLDRA…ATRSLFADEV (92 aa)). DNA contacts are provided by R317 and R322.

The protein belongs to the RuvB family. In terms of assembly, homohexamer. Forms an RuvA(8)-RuvB(12)-Holliday junction (HJ) complex. HJ DNA is sandwiched between 2 RuvA tetramers; dsDNA enters through RuvA and exits via RuvB. An RuvB hexamer assembles on each DNA strand where it exits the tetramer. Each RuvB hexamer is contacted by two RuvA subunits (via domain III) on 2 adjacent RuvB subunits; this complex drives branch migration. In the full resolvosome a probable DNA-RuvA(4)-RuvB(12)-RuvC(2) complex forms which resolves the HJ.

It is found in the cytoplasm. The catalysed reaction is ATP + H2O = ADP + phosphate + H(+). The RuvA-RuvB-RuvC complex processes Holliday junction (HJ) DNA during genetic recombination and DNA repair, while the RuvA-RuvB complex plays an important role in the rescue of blocked DNA replication forks via replication fork reversal (RFR). RuvA specifically binds to HJ cruciform DNA, conferring on it an open structure. The RuvB hexamer acts as an ATP-dependent pump, pulling dsDNA into and through the RuvAB complex. RuvB forms 2 homohexamers on either side of HJ DNA bound by 1 or 2 RuvA tetramers; 4 subunits per hexamer contact DNA at a time. Coordinated motions by a converter formed by DNA-disengaged RuvB subunits stimulates ATP hydrolysis and nucleotide exchange. Immobilization of the converter enables RuvB to convert the ATP-contained energy into a lever motion, pulling 2 nucleotides of DNA out of the RuvA tetramer per ATP hydrolyzed, thus driving DNA branch migration. The RuvB motors rotate together with the DNA substrate, which together with the progressing nucleotide cycle form the mechanistic basis for DNA recombination by continuous HJ branch migration. Branch migration allows RuvC to scan DNA until it finds its consensus sequence, where it cleaves and resolves cruciform DNA. The chain is Holliday junction branch migration complex subunit RuvB from Saccharopolyspora erythraea (strain ATCC 11635 / DSM 40517 / JCM 4748 / NBRC 13426 / NCIMB 8594 / NRRL 2338).